We begin with the raw amino-acid sequence, 429 residues long: WRKY transcription factor 44 (429 aa).

The segment at residues 159–223 is a DNA-binding region (WRKY 1); that stretch reads TGDRSSVDGY…YQGEHNHSKP (65 aa). Zn(2+) is bound by residues cysteine 190, cysteine 195, histidine 218, and histidine 220. Disordered stretches follow at residues 214-279 and 292-348; these read YQGE…RTEK and AVPR…SDSL. Composition is skewed to polar residues over residues 254–275, 295–313, and 334–345; these read QDPN…STQN, RSTN…SSQC, and SEAGVSQGSVES. Residues 343-408 constitute a DNA-binding region (WRKY 2); that stretch reads VESDSLEDGF…YEGKHNHHLL (66 aa). Zn(2+) is bound by residues cysteine 374, cysteine 379, histidine 403, and histidine 405. Low complexity predominate over residues 410–422; that stretch reads SPPSSSTLPFNSP. Residues 410-429 are disordered; that stretch reads SPPSSSTLPFNSPQLSKQTI.

This sequence belongs to the WRKY group I family. In terms of tissue distribution, leaf promordia, trichomes, atrichoblasts, fertilized eggs, seed coat.

The protein localises to the nucleus. Transcription factor. Interacts specifically with the W box (5'-(T)TGAC[CT]-3'), a frequently occurring elicitor-responsive cis-acting element. Regulates trichome development, production of mucilage and tannin in seed coats, and maybe root hair development. The polypeptide is WRKY transcription factor 44 (WRKY44) (Arabidopsis thaliana (Mouse-ear cress)).